Consider the following 418-residue polypeptide: Probable mitochondrial adenine nucleotide transporter BTL2 (418 aa).

3 Solcar repeats span residues 122–205, 215–300, and 329–414; these read MNTR…YRKQ, ATNF…LKSS, and LGPI…MKIV. A run of 6 helical transmembrane segments spans residues 127–147, 180–200, 221–241, 276–296, 335–355, and 383–403; these read HLWAGAVAAMVSKTFLAPLER, GNLLNVLRTAPFKAVNFCAYD, FVAGAAAGITATVLCLPLDTI, LVPSIASMALSGAVFYGVYDI, LMYGAIAGACTEVATYPFEVV, and IPALYAGLLPSLLQVLPSASI.

It belongs to the mitochondrial carrier (TC 2.A.29) family.

It is found in the mitochondrion inner membrane. Probable mitochondrial adenylate carrier that catalyzes the transport of ATP, ADP and AMP. The polypeptide is Probable mitochondrial adenine nucleotide transporter BTL2 (Arabidopsis thaliana (Mouse-ear cress)).